The following is a 485-amino-acid chain: MTDRPTTALPGAQIAGRPVKVGFISLGCAKNLVDTESMIGLLRNTGYQITNRAEEADVLVVNTCGFIDAAKQESVDAILEAAQHKTRGRCQALVVAGCMVPRYGEELAREIPEIDALVGTADYPRIGEVVAGILAGQRVQQISDPDSITDWNFERVLATPGYTAYLKIAEGCDCACAFCSIPLMRGRHRSRPIESIVDEARRLAGMGVRELVVISQDTTYYGLDLYRKPMLARLLRELAQVDGIRWIRIHYSYPTRITDELIEVIVTEPKVLNYLDLPLQHGSNRVLRIMNRPANAEGYLRLVQKLRERVPDICLRSTFIAGHPGETEEDFELLLDFLRACEFDHVGVFAYSQEEGTKAGQMEQLPEEVRLARRDRAMEVQQEIARRRNQLQVGRELEVLVEGRSPQGRGWFVGRCYGQSPGIDGVVLFRAPAGAELKPGDMVQVRITGVQDYDLLGEATEPLTVDGIAQEQDLILPVFHLTRHQ.

The MTTase N-terminal domain maps to Val19–Ala135. [4Fe-4S] cluster contacts are provided by Cys28, Cys64, Cys98, Cys172, Cys176, and Cys179. The region spanning Ala158 to Arg387 is the Radical SAM core domain. A TRAM domain is found at Gln390 to Glu461.

The protein belongs to the methylthiotransferase family. RimO subfamily. It depends on [4Fe-4S] cluster as a cofactor.

The protein resides in the cytoplasm. It catalyses the reaction L-aspartate(89)-[ribosomal protein uS12]-hydrogen + (sulfur carrier)-SH + AH2 + 2 S-adenosyl-L-methionine = 3-methylsulfanyl-L-aspartate(89)-[ribosomal protein uS12]-hydrogen + (sulfur carrier)-H + 5'-deoxyadenosine + L-methionine + A + S-adenosyl-L-homocysteine + 2 H(+). Functionally, catalyzes the methylthiolation of an aspartic acid residue of ribosomal protein uS12. This Symbiobacterium thermophilum (strain DSM 24528 / JCM 14929 / IAM 14863 / T) protein is Ribosomal protein uS12 methylthiotransferase RimO.